Consider the following 213-residue polypeptide: Ribonuclease HII (213 aa).

One can recognise an RNase H type-2 domain in the interval 18 to 213; that stretch reads GLHAGVDEVG…RPVKERLAKR (196 aa). Asp-24, Glu-25, and Asp-116 together coordinate a divalent metal cation.

The protein belongs to the RNase HII family. Mn(2+) is required as a cofactor. The cofactor is Mg(2+).

Its subcellular location is the cytoplasm. It catalyses the reaction Endonucleolytic cleavage to 5'-phosphomonoester.. Functionally, endonuclease that specifically degrades the RNA of RNA-DNA hybrids. This Shewanella woodyi (strain ATCC 51908 / MS32) protein is Ribonuclease HII.